A 246-amino-acid chain; its full sequence is Enolase-phosphatase E1 (246 aa).

Mg(2+)-binding residues include D11 and E13. Substrate is bound by residues 140 to 141 (SS) and K174. D199 is a Mg(2+) binding site.

Belongs to the HAD-like hydrolase superfamily. MasA/MtnC family. In terms of assembly, monomer. Mg(2+) is required as a cofactor.

It localises to the cytoplasm. The protein resides in the nucleus. The catalysed reaction is 5-methylsulfanyl-2,3-dioxopentyl phosphate + H2O = 1,2-dihydroxy-5-(methylsulfanyl)pent-1-en-3-one + phosphate. The protein operates within amino-acid biosynthesis; L-methionine biosynthesis via salvage pathway; L-methionine from S-methyl-5-thio-alpha-D-ribose 1-phosphate: step 3/6. It functions in the pathway amino-acid biosynthesis; L-methionine biosynthesis via salvage pathway; L-methionine from S-methyl-5-thio-alpha-D-ribose 1-phosphate: step 4/6. Functionally, bifunctional enzyme that catalyzes the enolization of 2,3-diketo-5-methylthiopentyl-1-phosphate (DK-MTP-1-P) into the intermediate 2-hydroxy-3-keto-5-methylthiopentenyl-1-phosphate (HK-MTPenyl-1-P), which is then dephosphorylated to form the acireductone 1,2-dihydroxy-3-keto-5-methylthiopentene (DHK-MTPene). The polypeptide is Enolase-phosphatase E1 (Acyrthosiphon pisum (Pea aphid)).